Reading from the N-terminus, the 286-residue chain is ATP synthase gamma chain (286 aa).

Belongs to the ATPase gamma chain family. As to quaternary structure, F-type ATPases have 2 components, CF(1) - the catalytic core - and CF(0) - the membrane proton channel. CF(1) has five subunits: alpha(3), beta(3), gamma(1), delta(1), epsilon(1). CF(0) has three main subunits: a, b and c.

Its subcellular location is the cell inner membrane. Its function is as follows. Produces ATP from ADP in the presence of a proton gradient across the membrane. The gamma chain is believed to be important in regulating ATPase activity and the flow of protons through the CF(0) complex. The chain is ATP synthase gamma chain from Pseudomonas syringae pv. tomato (strain ATCC BAA-871 / DC3000).